Reading from the N-terminus, the 171-residue chain is Small ribosomal subunit protein uS5 (171 aa).

The S5 DRBM domain maps to 15–78; that stretch reads LEEKVVKINR…EKAKKQLVRI (64 aa).

The protein belongs to the universal ribosomal protein uS5 family. As to quaternary structure, part of the 30S ribosomal subunit. Contacts proteins S4 and S8.

Its function is as follows. With S4 and S12 plays an important role in translational accuracy. Functionally, located at the back of the 30S subunit body where it stabilizes the conformation of the head with respect to the body. This is Small ribosomal subunit protein uS5 from Onion yellows phytoplasma (strain OY-M).